A 247-amino-acid chain; its full sequence is Cell division protein ZapD (247 aa).

This sequence belongs to the ZapD family. In terms of assembly, interacts with FtsZ.

The protein localises to the cytoplasm. Functionally, cell division factor that enhances FtsZ-ring assembly. Directly interacts with FtsZ and promotes bundling of FtsZ protofilaments, with a reduction in FtsZ GTPase activity. The polypeptide is Cell division protein ZapD (Shigella flexneri).